The sequence spans 293 residues: D-psicose 3-epimerase (293 aa).

Substrate is bound by residues Tyr6 and Ala107. The active-site Proton donor/acceptor is Glu150. Residue Glu150 coordinates Mn(2+). Substrate contacts are provided by residues Glu156 and 183 to 186 (DTFH). Mn(2+) contacts are provided by Asp183 and His209. A substrate-binding site is contributed by Arg215. Glu244 serves as the catalytic Proton donor/acceptor. Glu244 is a binding site for Mn(2+).

It belongs to the hyi family. As to quaternary structure, homotetramer. The cofactor is Mn(2+). Requires Co(2+) as cofactor.

It catalyses the reaction D-allulose = keto-D-fructose. In terms of biological role, involved in the biosynthesis of D-psicose. Catalyzes the reversible epimerization of D-fructose at the C3 position to yield D-psicose. The enzyme is highly specific for D-psicose and shows very low activity with D-tagatose. The chain is D-psicose 3-epimerase from Ruminiclostridium cellulolyticum (strain ATCC 35319 / DSM 5812 / JCM 6584 / H10) (Clostridium cellulolyticum).